The following is a 979-amino-acid chain: MHC class II regulatory factor RFX1 (979 aa).

3 disordered regions span residues 1–136 (MATQ…QVVQ), 181–227 (QSAA…PTGT), and 370–405 (TSTG…STGG). Positions 12 to 44 (APPPSQPPQAPPQAQPQPPPPPPPAAPQPPQPP) are enriched in pro residues. Over residues 45–73 (TAAATPQPQYVTELQSPQPQAQPPGGQKQ) the composition is skewed to low complexity. Serine 60 carries the post-translational modification Phosphoserine. Over residues 81 to 96 (VPAPSQPTGAPTPSPA) the composition is skewed to pro residues. The span at 114 to 126 (ETVSEASPGSTAS) shows a compositional bias: polar residues. A compositionally biased stretch (low complexity) spans 127–136 (QTGVPTQVVQ). Polar residues-rich tracts occupy residues 190–203 (GQVS…QQVH) and 209–220 (SPVQANSSSSKT). Over residues 370–379 (TSTGAGASNS) the composition is skewed to low complexity. A compositionally biased stretch (gly residues) spans 380–405 (SGGGGSGGGGGGGGGGGGGGSGSTGG). Positions 438-513 (TVQWLLDNYE…YHYYGLRIKA (76 aa)) form a DNA-binding region, RFX-type winged-helix. The segment at 744-979 (FAQTLRRYTS…GLFVQALPSS (236 aa)) is necessary for dimerization. The interval 915–960 (SLNPLDPDKDEEEEEEEESEDELPQDISLAAGGESPALGPETLEPP) is disordered. Positions 922–938 (DKDEEEEEEEESEDELP) are enriched in acidic residues. Phosphoserine is present on residues serine 978 and serine 979.

This sequence belongs to the RFX family. In terms of assembly, homodimer; binds DNA as a homodimer. Heterodimer; heterodimerizes with RFX2 and RFX3.

The protein localises to the nucleus. Its function is as follows. Regulatory factor essential for MHC class II genes expression. Binds to the X boxes of MHC class II genes. Also binds to an inverted repeat (ENH1) required for hepatitis B virus genes expression and to the most upstream element (alpha) of the RPL30 promoter. In Homo sapiens (Human), this protein is MHC class II regulatory factor RFX1 (RFX1).